Consider the following 424-residue polypeptide: GTPase Obg (424 aa).

The region spanning 2–158 is the Obg domain; it reads AKFIDQVKIM…YEANIVLKIL (157 aa). An OBG-type G domain is found at 159-326; it reads SDVGLVGLPS…LKKIIWEFLE (168 aa). GTP is bound by residues 165–172, 190–194, 211–214, 280–283, and 307–309; these read GLPSCGKS, FTTLV, DLPG, NKSD, and SAL. Positions 172 and 192 each coordinate Mg(2+). Positions 344–422 constitute an OCT domain; that stretch reads KEINYEPDFV…IYQHKFEWEE (79 aa).

Belongs to the TRAFAC class OBG-HflX-like GTPase superfamily. OBG GTPase family. Monomer. Mg(2+) serves as cofactor.

The protein localises to the cytoplasm. An essential GTPase which binds GTP, GDP and possibly (p)ppGpp with moderate affinity, with high nucleotide exchange rates and a fairly low GTP hydrolysis rate. Plays a role in control of the cell cycle, stress response, ribosome biogenesis and in those bacteria that undergo differentiation, in morphogenesis control. This chain is GTPase Obg, found in Mycoplasmopsis synoviae (strain 53) (Mycoplasma synoviae).